Here is a 1374-residue protein sequence, read N- to C-terminus: DNA-directed RNA polymerase subunit beta' (1374 aa).

Residues Cys-71, Cys-73, Cys-86, and Cys-89 each coordinate Zn(2+). Residues Asp-462, Asp-464, and Asp-466 each coordinate Mg(2+). Zn(2+)-binding residues include Cys-810, Cys-884, Cys-891, and Cys-894.

It belongs to the RNA polymerase beta' chain family. In terms of assembly, the RNAP catalytic core consists of 2 alpha, 1 beta, 1 beta' and 1 omega subunit. When a sigma factor is associated with the core the holoenzyme is formed, which can initiate transcription. Requires Mg(2+) as cofactor. Zn(2+) serves as cofactor.

The catalysed reaction is RNA(n) + a ribonucleoside 5'-triphosphate = RNA(n+1) + diphosphate. Its function is as follows. DNA-dependent RNA polymerase catalyzes the transcription of DNA into RNA using the four ribonucleoside triphosphates as substrates. This chain is DNA-directed RNA polymerase subunit beta', found in Rickettsia massiliae (strain Mtu5).